A 519-amino-acid chain; its full sequence is Nif-specific regulatory protein (519 aa).

In terms of domain architecture, Sigma-54 factor interaction spans 177–405 (IVGESPALKR…LDNCVQRTAT (229 aa)). ATP is bound by residues 205–212 (GESGTGKE) and 268–277 (ANGGTLLLDE). The segment at 406-476 (LASSNTITSS…ATIEAAGLTE (71 aa)) is inter-domain linker. A divalent metal cation contacts are provided by Cys-419 and Cys-424. Residues 477-519 (RDRLIKAMERAGWVQAKAARILGKTPRQVGYALRRHRIDVKKE) are C-terminal DNA-binding domain. Positions 491–510 (QAKAARILGKTPRQVGYALR) form a DNA-binding region, H-T-H motif.

As to quaternary structure, interacts with sigma-54.

Required for activation of most nif operons, which are directly involved in nitrogen fixation. This chain is Nif-specific regulatory protein (nifA), found in Rhizobium leguminosarum.